Consider the following 175-residue polypeptide: Large ribosomal subunit protein uL10 (175 aa).

Belongs to the universal ribosomal protein uL10 family. In terms of assembly, part of the ribosomal stalk of the 50S ribosomal subunit. The N-terminus interacts with L11 and the large rRNA to form the base of the stalk. The C-terminus forms an elongated spine to which L12 dimers bind in a sequential fashion forming a multimeric L10(L12)X complex.

Its function is as follows. Forms part of the ribosomal stalk, playing a central role in the interaction of the ribosome with GTP-bound translation factors. The protein is Large ribosomal subunit protein uL10 of Synechococcus sp. (strain CC9311).